Consider the following 456-residue polypeptide: Exodeoxyribonuclease 7 large subunit (456 aa).

The protein belongs to the XseA family. As to quaternary structure, heterooligomer composed of large and small subunits.

Its subcellular location is the cytoplasm. It carries out the reaction Exonucleolytic cleavage in either 5'- to 3'- or 3'- to 5'-direction to yield nucleoside 5'-phosphates.. In terms of biological role, bidirectionally degrades single-stranded DNA into large acid-insoluble oligonucleotides, which are then degraded further into small acid-soluble oligonucleotides. The protein is Exodeoxyribonuclease 7 large subunit of Erwinia tasmaniensis (strain DSM 17950 / CFBP 7177 / CIP 109463 / NCPPB 4357 / Et1/99).